Reading from the N-terminus, the 617-residue chain is Chitin elicitor receptor kinase 1 (617 aa).

A signal peptide spans 1–23 (MKLKISLIAPILLLFSFFFAVES). Residues 24 to 232 (KCRTSCPLAL…KSSKQDGVGA (209 aa)) lie on the Extracellular side of the membrane. Intrachain disulfides connect Cys-25/Cys-93, Cys-29/Cys-155, and Cys-91/Cys-153. N-linked (GlcNAc...) asparagine glycans are attached at residues Asn-40, Asn-52, and Asn-102. Residues 46–74 (VINQNLNSSIAPYDQINFDPILRYNSNIK) enclose the LysM 1; degenerate domain. The 33-residue stretch at 108–140 (RQEDTYERVAISNYANLTTMESLQARNPFPATN) folds into the LysM 2; degenerate domain. Residue 109 to 115 (QEDTYER) coordinates chitin. Asn-123 is a glycosylation site (N-linked (GlcNAc...) asparagine). Chitin is bound at residue 137–143 (PATNIPL). Asn-152 carries an N-linked (GlcNAc...) asparagine glycan. Residues 168 to 211 (VTYPLRPEDSLSSIARSSGVSADILQRYNPGVNFNSGNGIVYVP) enclose the LysM 3 domain. A helical transmembrane segment spans residues 233–253 (GVIAGIVIGVIVALLLILFIV). The Cytoplasmic portion of the chain corresponds to 254-617 (YYAYRKNKSK…EDLVSLMSGR (364 aa)). Ser-266, Ser-268, and Ser-274 each carry phosphoserine. The Protein kinase domain maps to 322-594 (FNLSFKIGQG…YIVVALSTLF (273 aa)). ATP contacts are provided by residues 328–336 (IGQGGFGAV) and Lys-349. Residue Tyr-390 is modified to Phosphotyrosine. The active-site Proton acceptor is the Asp-441. 2 positions are modified to phosphothreonine: Thr-479 and Thr-519.

This sequence belongs to the protein kinase superfamily. Ser/Thr protein kinase family. As to quaternary structure, forms homodimers and homooligomers. Homodimerization is required to trigger plant defenses. Binds to chitin, chitosan and chito-oligomer oligosaccharide elicitors. Interaction with chitin octamer (NAG(8)) promotes homodimerization while shorter chitin oligomers inhibit homodimerization. Interacts with Pseudomonas syringae hopAB2/avrPtoB. Interacts (preferentially when unphosphorylated) with PBL27 at the plasma membrane. Binds to IOS1. In terms of processing, autophosphorylated. Autophosphorylation is induced by chitin and derivatives. Ubiquitinated and targeted to the proteasome by hopAB2/avrPtoB of Pseudomonas syringae pv. tomato DC3000. In terms of tissue distribution, expressed ubiquitously, with lowest expression in pollen.

Its subcellular location is the cell membrane. It catalyses the reaction L-seryl-[protein] + ATP = O-phospho-L-seryl-[protein] + ADP + H(+). The enzyme catalyses L-threonyl-[protein] + ATP = O-phospho-L-threonyl-[protein] + ADP + H(+). Its activity is regulated as follows. Activated by chitin-mediated homodimerization. Functionally, lysin motif (LysM) receptor kinase that functions as a cell surface receptor in chitin elicitor (chitooligosaccharides) signaling leading to innate immunity toward both biotic and abiotic stresses (e.g. tolerance to salinity, heavy-metal stresses, and Botrytis cinerea infection). Recognizes microbe-derived N-acetylglucosamine (NAG)-containing ligands. Involved in the resistance to pathogenic fungi Alternaria brassicicola and Erysiphe cichoracearum, probably by sensing microbe-associated molecular patterns (MAMP) and pathogen-associated molecular patterns (PAMP). Plays an essential role in detecting peptidoglycans (e.g. PGNs) and restricting bacterial growth. Target of the bacterial type III effector E3-ligase protein hopAB2/avrPtoB of Pseudomonas syringae pv. tomato DC3000 that mediates ubiquitination and subsequent proteolysis, thus blocking all defense responses by suppressing PAMP-triggered immunity (PTI). Mediates chitin-induced phosphorylation of PBL27. The protein is Chitin elicitor receptor kinase 1 (CERK1) of Arabidopsis thaliana (Mouse-ear cress).